Consider the following 264-residue polypeptide: Meiotic recombination protein REC102 (264 aa).

It belongs to the TOP6B-like family. As to quaternary structure, interacts with REC104; seems to form a functional unit with REC104. REC102-REC104 interacts with SKI8-SPO11 and this interaction is required for proper subcellular location of the proteins during the initiation of recombination. Interacts with MEI4, REC114 and SPO11.

The protein localises to the nucleus. Functionally, required for formation of the SPO11-mediated double-strand breaks (DSBs) that initiate meiotic recombination. May mediate the interaction between SPO11 subunits during meiosis. Also needed for homolog chromosome pairing, synaptonemal complex formation, and for the proper timing of the first meiotic division. Not required for mitosis and mitotic DNA repair mechanisms. The polypeptide is Meiotic recombination protein REC102 (Saccharomyces cerevisiae (strain ATCC 204508 / S288c) (Baker's yeast)).